Reading from the N-terminus, the 241-residue chain is UDP-2,3-diacylglucosamine hydrolase (241 aa).

5 residues coordinate Mn(2+): D8, H10, D41, N79, and H114. Residue 79–80 (NR) participates in substrate binding. Substrate-binding residues include D122, S160, K167, and H195. 2 residues coordinate Mn(2+): H195 and H197.

Belongs to the LpxH family. Requires Mn(2+) as cofactor.

The protein localises to the cell inner membrane. The enzyme catalyses UDP-2-N,3-O-bis[(3R)-3-hydroxytetradecanoyl]-alpha-D-glucosamine + H2O = 2-N,3-O-bis[(3R)-3-hydroxytetradecanoyl]-alpha-D-glucosaminyl 1-phosphate + UMP + 2 H(+). It functions in the pathway glycolipid biosynthesis; lipid IV(A) biosynthesis; lipid IV(A) from (3R)-3-hydroxytetradecanoyl-[acyl-carrier-protein] and UDP-N-acetyl-alpha-D-glucosamine: step 4/6. Its function is as follows. Hydrolyzes the pyrophosphate bond of UDP-2,3-diacylglucosamine to yield 2,3-diacylglucosamine 1-phosphate (lipid X) and UMP by catalyzing the attack of water at the alpha-P atom. Involved in the biosynthesis of lipid A, a phosphorylated glycolipid that anchors the lipopolysaccharide to the outer membrane of the cell. In Azotobacter vinelandii (strain DJ / ATCC BAA-1303), this protein is UDP-2,3-diacylglucosamine hydrolase.